Reading from the N-terminus, the 704-residue chain is Elongation factor G (704 aa).

The region spanning 10–290 (NKVRNIGIMA…AVVDFLPNPL (281 aa)) is the tr-type G domain. Residues 19 to 26 (AHIDAGKT), 83 to 87 (DTPGH), and 137 to 140 (NKMD) each bind GTP.

Belongs to the TRAFAC class translation factor GTPase superfamily. Classic translation factor GTPase family. EF-G/EF-2 subfamily.

The protein resides in the cytoplasm. Functionally, catalyzes the GTP-dependent ribosomal translocation step during translation elongation. During this step, the ribosome changes from the pre-translocational (PRE) to the post-translocational (POST) state as the newly formed A-site-bound peptidyl-tRNA and P-site-bound deacylated tRNA move to the P and E sites, respectively. Catalyzes the coordinated movement of the two tRNA molecules, the mRNA and conformational changes in the ribosome. This chain is Elongation factor G, found in Paenarthrobacter aurescens (strain TC1).